Here is a 4650-residue protein sequence, read N- to C-terminus: Nonribosomal peptide synthetase lenA (4650 aa).

The adenylation 1 stretch occupies residues 227–628 (GSILDTIRAK…DGSVIHVGRK (402 aa)). Residues 773-849 (PPETVLEKAL…KLAQYLRNTE (77 aa)) enclose the Carrier 1 domain. At serine 810 the chain carries O-(pantetheine 4'-phosphoryl)serine. A condensation 1 region spans residues 890 to 1212 (EDCYPCTALQ…CDFQSQLIFQ (323 aa)). The adenylation 2 stretch occupies residues 1288 to 1622 (ELELNAQKEP…RKIRPGYLGR (335 aa)). Positions 1745-1822 (PPVSAAEKKW…EIAALSETRD (78 aa)) constitute a Carrier 2 domain. Position 1782 is an O-(pantetheine 4'-phosphoryl)serine (serine 1782). The condensation 2 stretch occupies residues 1850–2110 (ATNLIAATVH…GEKTRPGGGA (261 aa)). The segment at 2183–2511 (RCVHDLVHDA…RTGDLIKLRG (329 aa)) is adenylation 3. The region spanning 2630-2708 (APQNRLQHDI…EADVGLDHAS (79 aa)) is the Carrier 3 domain. The residue at position 2667 (serine 2667) is an O-(pantetheine 4'-phosphoryl)serine. The epimerase stretch occupies residues 2722-2998 (ESMARALAVI…KDARRRSPAN (277 aa)). Residues 3128–3565 (VQDVYPCTPI…VDDSQRQQIL (438 aa)) are condensation 3. Positions 3578-3980 (CVHHIIHQRC…FVGRKDNQIK (403 aa)) are adenylation 4. Positions 4114–4190 (TPSTPLEAQL…QLAAVLEEGA (77 aa)) constitute a Carrier 4 domain. Serine 4151 is modified (O-(pantetheine 4'-phosphoryl)serine). The condensation 4 stretch occupies residues 4249–4648 (HMVLTFSQPV…TTTPEKLVAE (400 aa)).

It belongs to the NRP synthetase family. Pantetheine 4'-phosphate serves as cofactor.

It functions in the pathway alkaloid biosynthesis. Its function is as follows. Nonribosomal peptide synthetase; part of the gene cluster that mediates the biosynthesis of the ergot alkaloids lentopeptins A and B. Within the pathway, lenA catalyzes the biosynthesis of the Ala-Val-Ala peptide chain, including a cinnamic acid moiety as the starting unit. The release of the peptide from the enzyme is accomplished via a cyclization reaction catalyzed by the terminal condensation-like (Ct) domain of lenA to form the N-acyldiketopiperazine intermediate. The reaction appears to proceed through a nucleophilic attack on the carbonyl carbon by a lone electron pair of the valine amide nitrogen. The phenylalanine ammonia-lyase lenB provides the starter unit for the synthesis of the N-acyldiketopiperazine intermediate by the NRPS lenA, while the cytochrome P450 monooxygenase lenC is involved in the post-NRPS oxidative modification steps to form lentopeptins A and B. This Aspergillus lentulus protein is Nonribosomal peptide synthetase lenA.